The chain runs to 146 residues: Hemoglobin subunit beta-2 (146 aa).

At Val1 the chain carries N-acetylvaline. Residues 2–146 form the Globin domain; that stretch reads HLHGDEKAAV…VASALAHKYH (145 aa). Lys17 carries the N6-succinyllysine modification. Position 44 is a phosphoserine (Ser44). Residue Lys59 is modified to N6-succinyllysine. Residues His63 and His92 each contribute to the heme b site. Arg104 is subject to Asymmetric dimethylarginine. A Phosphothreonine modification is found at Thr123.

This sequence belongs to the globin family. As to quaternary structure, heterotetramer of two alpha chains and two beta chains. In terms of tissue distribution, red blood cells.

Functionally, involved in oxygen transport from the lung to the various peripheral tissues. The protein is Hemoglobin subunit beta-2 (HBB2) of Tapirus terrestris (Lowland tapir).